Reading from the N-terminus, the 335-residue chain is 2,4-dienoyl-CoA reductase [(3E)-enoyl-CoA-producing], mitochondrial (335 aa).

The transit peptide at 1-34 (MKLPARVFFTLGSRLPCGLAPRRFFSYGTKILYQ) directs the protein to the mitochondrion. Lys42 and Lys49 each carry N6-acetyllysine; alternate. Residues Lys42 and Lys49 each carry the N6-succinyllysine; alternate modification. Position 66-71 (66-71 (GGGTGL)) interacts with NADP(+). Phosphothreonine is present on Thr69. Lys73 carries the N6-succinyllysine modification. NADP(+) is bound at residue Arg91. A substrate-binding site is contributed by Arg91. Lys97 bears the N6-acetyllysine; alternate mark. Lys97 bears the N6-succinyllysine; alternate mark. Asp117 provides a ligand contact to NADP(+). 3 residues coordinate substrate: Arg119, Phe149, and Ser157. The active-site Proton acceptor is Tyr199. Lys214 is a binding site for NADP(+). Lys230 is subject to N6-acetyllysine. 240–243 (PGPI) provides a ligand contact to NADP(+). Lys244 is subject to N6-acetyllysine; alternate. At Lys244 the chain carries N6-succinyllysine; alternate. Arg251 contributes to the substrate binding site. N6-acetyllysine; alternate occurs at positions 260 and 319. Lys260 and Lys319 each carry N6-succinyllysine; alternate.

The protein belongs to the short-chain dehydrogenases/reductases (SDR) family. 2,4-dienoyl-CoA reductase subfamily. As to quaternary structure, homotetramer. In terms of tissue distribution, heart = liver = pancreas &gt; kidney &gt;&gt; skeletal muscle = lung.

It localises to the mitochondrion. It catalyses the reaction a (2E,4E)-dienoyl-CoA + NADPH + H(+) = a 4,5-saturated-(3E)-enoyl-CoA + NADP(+). It carries out the reaction a (2E,4Z)-dienoyl-CoA + NADPH + H(+) = a 4,5-saturated-(3E)-enoyl-CoA + NADP(+). The catalysed reaction is (2E,4E)-hexadienoyl-CoA + NADPH + H(+) = (3E)-hexenoyl-CoA + NADP(+). Functionally, auxiliary enzyme of beta-oxidation. It participates in the metabolism of unsaturated fatty enoyl-CoA esters having double bonds in both even- and odd-numbered positions in mitochondria. Catalyzes the NADP-dependent reduction of 2,4-dienoyl-CoA to yield trans-3-enoyl-CoA. This Homo sapiens (Human) protein is 2,4-dienoyl-CoA reductase [(3E)-enoyl-CoA-producing], mitochondrial (DECR1).